The primary structure comprises 59 residues: UPF0434 protein Noc_2677 (59 aa).

The protein belongs to the UPF0434 family.

The polypeptide is UPF0434 protein Noc_2677 (Nitrosococcus oceani (strain ATCC 19707 / BCRC 17464 / JCM 30415 / NCIMB 11848 / C-107)).